Reading from the N-terminus, the 680-residue chain is MIDRYKHQQLRIGLVSPQQISAWATKIIPNGEIVGEVTKPYTFHYKTNKPEKDGLFCERIFGPIKSGICACGNYRVIGDEKDDPKFCEQCGVEFVDSRIRRYQMGYIKLTCPVTHVWYLKRLPSYIANLLDKPLKELEGLVYCDFSFARPITKKPTFLRLRGSFEYEIQSWKYSIPLFFTTQGFDIFRNREISTGASAIREQLADLDLRIIIENSLVEWKQLGEEGPTGNEWEDRKIVRRKDFLVRRMELAKHFIRTNIEPEWMVLCLLPVLPPELRPIIQIEGGKLMSSDINELYRRVIYRNNTLTDLLTTSRSTPGELVMCQEKLVQEAVDTLLDNGIRGQPMRDGHNKVYKSFSDVIEGKEGRFRETLLGKRVDYSGRSVIVVGPSLSLHRCGLPREIAIELFQTFVIRGLIRQHLASNIGVAKSQIREKKPIVWEILQEVMQGHPVLLNRAPTLHRLGIQSFQPILVEGRTICLHPLVCKGFNADFDGDQMAVHVPLSLEAQAEARLLMFSHMNLLSPAIGDPISVPTQDMLIGLYVLTSGTRRGICANRYNPCNRKNYQNERIYETNYKYTKEPFFCNSYDAIGAYRQKRINLDSPLWLRWQLDQRVIASKEVPIEVHYESFGNYHEIYAHYLIVRSVKKETFCIYIRTTVGHISFYRELEEAVQGFSQACSYDT.

Positions 69, 71, 87, and 90 each coordinate Zn(2+). The Mg(2+) site is built by D489, D491, and D493.

This sequence belongs to the RNA polymerase beta' chain family. RpoC1 subfamily. As to quaternary structure, in plastids the minimal PEP RNA polymerase catalytic core is composed of four subunits: alpha, beta, beta', and beta''. When a (nuclear-encoded) sigma factor is associated with the core the holoenzyme is formed, which can initiate transcription. Mg(2+) serves as cofactor. It depends on Zn(2+) as a cofactor.

The protein resides in the plastid. Its subcellular location is the chloroplast. The catalysed reaction is RNA(n) + a ribonucleoside 5'-triphosphate = RNA(n+1) + diphosphate. In terms of biological role, DNA-dependent RNA polymerase catalyzes the transcription of DNA into RNA using the four ribonucleoside triphosphates as substrates. This chain is DNA-directed RNA polymerase subunit beta', found in Nasturtium officinale (Watercress).